The following is a 354-amino-acid chain: DNA ligase C2 (354 aa).

The N6-AMP-lysine intermediate role is filled by K29.

It belongs to the ATP-dependent DNA ligase family.

The catalysed reaction is ATP + (deoxyribonucleotide)n-3'-hydroxyl + 5'-phospho-(deoxyribonucleotide)m = (deoxyribonucleotide)n+m + AMP + diphosphate.. DNA ligase that seals nicks in double-stranded DNA during DNA replication, DNA recombination and DNA repair. Has weak intrinsic nick joining activities and accumulates DNA-adenylate. Acts as a backup for LigD in the Ku-LigD-dependent NHEJ pathway. The protein is DNA ligase C2 (ligC2) of Mycolicibacterium smegmatis (strain ATCC 700084 / mc(2)155) (Mycobacterium smegmatis).